The chain runs to 1758 residues: MSCSKAYGERYVASVQGSAPSPRKKSTRGFYFAKLYYEAKEYDLAKKYICTYINVREMDPRAHRFLGLLYELEENTEKAVECYRRSVELNPTQKDLVLKIAELLCKNDVTDGRAKYWVERAAKLFPGSPAIYKLKEQLLDCEGEDGWNKLFDLIQSELYVRPDDVHVNIRLVELYRSTKRLKDAVARCHEAERNIALRSSLEWNSCVVQTLKEYLESLQCLESDKSDWRATNTDLLLAYANLMLLTLSTRDVQESRELLESFDSALQSAKSSLGGNDELSATFLEMKGHFYMHAGSLLLKMGQHGNNVQWRALSELAALCYLIAFQVPRPKIKLIKGEAGQNLLEMMACDRLSQSGHMLLNLSRGKQDFLKVVVETFANKSGQSALYDALFSSQSPKDTSFLGSDDIGNIDVQEPELEDLARYDVGAIRAHNGSLQHLTWLGLQWNSLPALPGIRKWLKQLFHHLPQETSRLETNAPESICILDLEVFLLGVVYTSHLQLKEKCNSHHSSYQPLCLPLPVCKQLCTERQKSWWDAVCTLIHRKAVPGNSAKLRLLVQHEINTLRAQEKHGLQPALLVHWAKCLQKMGSGLNSFYDQREYIGRSVHYWKKVLPLLKIIKKKNSIPEPIDPLFKHFHSVDIQASEIVEYEEDAHVTFAILDAVNGNIEDAMTAFESIKSVVSYWNLALIFHRKAEDIANDALSPEEQEECKNYLRKTRGYLIKILDDSDSNLSVVKKLPVPLESVKEMLKSVMQELENYSEGDPLYKNGSLRNADSEIKHSTPSPTKYSLSPSKSYKYSPKTPPRWAEDQNSLLKMIRQEVKAIKEEMQELKLNSSKSASHHRWPTENYGPDSVPDGYQGSQTFHGAPLTVATTGPSVYYSQSPAYNSQYLLRPAANVTPTKGSSNTEFKSTKEGFSIPVSADGFKFGISEPGNQEKESEKPLENDTGFQAQDISGQKNGRGVIFGQTSSTFTFADVAKSTSGEGFQFGKKDPNFKGFSGAGEKLFSSQCGKMANKANTSGDFEKDDDAYKTEDSDDIHFEPVVQMPEKVELVIGEEGEKVLYSQGVKLFRFDAEVRQWKERGLGNLKILKNEVNGKPRMLMRREQVLKVCANHWITTTMNLKPLSGSDRAWMWSASDFSDGDAKLERLAAKFKTPELAEEFKQKFEECQQLLLDIPLQTPHKLVDTGRAAKLIQRAEEMKSGLKDFKTFLTNDQTKVTEEENKGSGTGAAGASDTTIKPNPENTGPTLEWDNCDLREDALDDSVSSSSVHASPLASSPVRKNLFHFGESTTGSNFSFKSALSPSKSPAKLNQSGTSVGTDEESDVTQEEERDGQYFEPVVPLPDLVEVSSGEENEKVVFSHRAELYRYDKDVGQWKERGIGDIKILQNYDNKQVRIVMRRDQVLKLCANHTITPDMSLQNMKGTERVWVWTACDFADGERKVEHLAVRFKLQDVADSFKKIFDEAKTAQEKDSLITPHVSRSSTPRESPCGKIAVAVLEETTRERTDVIQGDDVADAASEVEVSSTSETTTKAVVSPPKFVFGSESVKRIFSSEKSKPFAFGNSSATGSLFGFSFNASLKSNNSETSSVAQSGSESKVEPKKCELSKNSDIEQSSDSKVKNLSASFPMEESSINYTFKTPEKEPPLWHAEFTKEELVQKLSSTTKSADHLNGLLREAEATSAVLMEQIKLLKSEIRRLERNQEQEESAANVEHLKNVLLQFIFLKPGSERERLLPVINTMLQLSPEEKGKLAAVAQGEE.

Ser-21 is subject to Phosphoserine. 2 TPR repeats span residues 60–93 (PRAH…NPTQ) and 584–617 (QKMG…LKII). A disordered region spans residues 761-805 (DPLYKNGSLRNADSEIKHSTPSPTKYSLSPSKSYKYSPKTPPRWA). Residues 779 to 798 (STPSPTKYSLSPSKSYKYSP) are compositionally biased toward low complexity. Residues 1037–1173 (HFEPVVQMPE…FEECQQLLLD (137 aa)) enclose the RanBD1 1 domain. 2 disordered regions span residues 1213–1249 (QTKV…TLEW) and 1295–1332 (SFKS…ERDG). The span at 1236–1245 (IKPNPENTGP) shows a compositional bias: polar residues. Over residues 1295–1309 (SFKSALSPSKSPAKL) the composition is skewed to low complexity. Acidic residues predominate over residues 1318–1330 (TDEESDVTQEEER). In terms of domain architecture, RanBD1 2 spans 1334–1470 (YFEPVVPLPD…FDEAKTAQEK (137 aa)). Positions 1583 to 1594 (SETSSVAQSGSE) are enriched in polar residues. Residues 1583 to 1621 (SETSSVAQSGSESKVEPKKCELSKNSDIEQSSDSKVKNL) are disordered. The segment covering 1595–1618 (SKVEPKKCELSKNSDIEQSSDSKV) has biased composition (basic and acidic residues). One can recognise a GRIP domain in the interval 1703–1753 (QEESAANVEHLKNVLLQFIFLKPGSERERLLPVINTMLQLSPEEKGKLAAV).

This is RanBP2-like and GRIP domain-containing protein 4 (RGPD4) from Homo sapiens (Human).